Here is a 341-residue protein sequence, read N- to C-terminus: Protein pelota homolog (341 aa).

Belongs to the eukaryotic release factor 1 family. Pelota subfamily. Monomer. The cofactor is a divalent metal cation.

Its subcellular location is the cytoplasm. In terms of biological role, may function in recognizing stalled ribosomes, interact with stem-loop structures in stalled mRNA molecules, and effect endonucleolytic cleavage of the mRNA. May play a role in the release non-functional ribosomes and degradation of damaged mRNAs. Has endoribonuclease activity. In Methanoculleus marisnigri (strain ATCC 35101 / DSM 1498 / JR1), this protein is Protein pelota homolog.